Reading from the N-terminus, the 206-residue chain is Urease accessory protein UreG (206 aa).

12 to 19 (GPVGSGKT) is a binding site for GTP.

Belongs to the SIMIBI class G3E GTPase family. UreG subfamily. As to quaternary structure, homodimer. UreD, UreF and UreG form a complex that acts as a GTP-hydrolysis-dependent molecular chaperone, activating the urease apoprotein by helping to assemble the nickel containing metallocenter of UreC. The UreE protein probably delivers the nickel.

It is found in the cytoplasm. In terms of biological role, facilitates the functional incorporation of the urease nickel metallocenter. This process requires GTP hydrolysis, probably effectuated by UreG. This chain is Urease accessory protein UreG, found in Synechocystis sp. (strain ATCC 27184 / PCC 6803 / Kazusa).